We begin with the raw amino-acid sequence, 89 residues long: Inner kinetochore subunit mhf2 (89 aa).

This sequence belongs to the CENP-X/MHF2 family. In terms of assembly, the MHF histone-fold complex is a heterotetramer of 2 mhf1-mhf2 heterodimers. Component of the inner kinetochore constitutive centromere-associated network (CCAN) (also known as central kinetochore Sim4 complex in fission yeast), which is composed of at least cnl2, cnp3, cnp20, fta1, fta2, fta3, fta4, fta6, fta7, mal2, mhf1, mhf2, mis6, mis15, mis17, sim4 and wip1.

Its subcellular location is the nucleus. The protein resides in the cytoplasm. In terms of biological role, component of a FANCM-MHF complex that promotes gene conversion at blocked replication forks, probably by reversal of the stalled fork. FANCM-MHF promotes non-crossover recombination. In Schizosaccharomyces pombe (strain 972 / ATCC 24843) (Fission yeast), this protein is Inner kinetochore subunit mhf2.